Reading from the N-terminus, the 584-residue chain is 2-succinyl-5-enolpyruvyl-6-hydroxy-3-cyclohexene-1-carboxylate synthase (584 aa).

Belongs to the TPP enzyme family. MenD subfamily. As to quaternary structure, homodimer. It depends on Mg(2+) as a cofactor. Mn(2+) is required as a cofactor. Requires thiamine diphosphate as cofactor.

The enzyme catalyses isochorismate + 2-oxoglutarate + H(+) = 5-enolpyruvoyl-6-hydroxy-2-succinyl-cyclohex-3-ene-1-carboxylate + CO2. It participates in quinol/quinone metabolism; 1,4-dihydroxy-2-naphthoate biosynthesis; 1,4-dihydroxy-2-naphthoate from chorismate: step 2/7. The protein operates within quinol/quinone metabolism; menaquinone biosynthesis. Functionally, catalyzes the thiamine diphosphate-dependent decarboxylation of 2-oxoglutarate and the subsequent addition of the resulting succinic semialdehyde-thiamine pyrophosphate anion to isochorismate to yield 2-succinyl-5-enolpyruvyl-6-hydroxy-3-cyclohexene-1-carboxylate (SEPHCHC). This Bacillus anthracis protein is 2-succinyl-5-enolpyruvyl-6-hydroxy-3-cyclohexene-1-carboxylate synthase.